The sequence spans 231 residues: Dephospho-CoA kinase domain-containing protein (231 aa).

Residues 3–207 form the DPCK domain; sequence LVGLTGGIAS…HSLEYLPLRL (205 aa). 8–15 provides a ligand contact to ATP; sequence GGIASGKS.

The protein belongs to the CoaE family.

This Bos taurus (Bovine) protein is Dephospho-CoA kinase domain-containing protein (DCAKD).